Here is a 547-residue protein sequence, read N- to C-terminus: MASKEIKFGRTAREKMLRGVDILADAVKVTLGPKGRNVIIDKSFGAPRITKDGVSVAKEIELEDKFENMGAQMVREVASKTNDIAGDGTTTATVLAQAIVREGNKAVAAGMNPMDLKRGIDLAVADVVKDLQAKAKKISTSEEVAQVGTISANGDKQVGLDIAEAMQKVGNEGVITVEEAKTAETELEVVEGMQFDRGYLSPYFVTNPEKMIADLEDVFILLHEKKLSNLQSMLPVLEAVVQTGKPLLIVAEDVEGEALATLVVNKLRGGLKIAAVKAPGFGDRRKAMLEDIAILTGGTVISEDLGIKLESVTLDMLGRAKKVSISKENTTIVDGSGAKTDIEGRVAQIKAQIEETTSDYDREKLQERLAKLAGGVAVIRVGGSTEVEVKEKKDRIDDALNATRAAVQEGIVPGGGIALLRSSTKITVKGANDDQEAGINIVRRALQSLVRQIAENAGDEASIVVGKVLDKNEDNFGYNAQTSEYGDMIAMGIVDPLKVVRTALQNAASVASLLITTEAMIAELPKKESAGGGMPGGMGGMGGMDMM.

ATP-binding positions include 30–33 (TLGP), Lys51, 87–91 (DGTTT), Gly415, and Asp495.

It belongs to the chaperonin (HSP60) family. In terms of assembly, forms a cylinder of 14 subunits composed of two heptameric rings stacked back-to-back. Interacts with the co-chaperonin GroES.

It is found in the cytoplasm. It catalyses the reaction ATP + H2O + a folded polypeptide = ADP + phosphate + an unfolded polypeptide.. In terms of biological role, together with its co-chaperonin GroES, plays an essential role in assisting protein folding. The GroEL-GroES system forms a nano-cage that allows encapsulation of the non-native substrate proteins and provides a physical environment optimized to promote and accelerate protein folding. The polypeptide is Chaperonin GroEL 1 (Rhizobium johnstonii (strain DSM 114642 / LMG 32736 / 3841) (Rhizobium leguminosarum bv. viciae)).